The chain runs to 224 residues: Transmembrane emp24 domain-containing protein 7 (224 aa).

An N-terminal signal peptide occupies residues 1-34 (MPRPGSAQRWAAVAGRWGCRLLALLLLVPGPGGA). The Lumenal portion of the chain corresponds to 35–187 (SEITFELPDN…RAEDLNTRVA (153 aa)). In terms of domain architecture, GOLD spans 46 to 128 (KQCFYEDIAQ…HKTVYFDFQV (83 aa)). Residue Asn103 is glycosylated (N-linked (GlcNAc...) asparagine). A helical membrane pass occupies residues 188 to 208 (YWSVGEALILLVVSIGQVFLL). The Cytoplasmic portion of the chain corresponds to 209–224 (KSFFSDKRTTTTRVGS). The short motif at 211–212 (FF) is the COPII vesicle coat-binding element. Residues 211–224 (FFSDKRTTTTRVGS) carry the COPI vesicle coat-binding motif.

This sequence belongs to the EMP24/GP25L family. Predominantly monomeric and to lesser extent homodimeric in endoplasmic reticulum, endoplasmic reticulum-Golgi intermediate compartment and cis-Golgi network. Oligomerizes with other members of the EMP24/GP25L family such as TMED2, TMED9 and TMED10. Interacts (via C-terminus) with COPG1; the interaction involves dimeric TMED7. N-linked glycosylated in complex form containing terminal sialic acid.

Its subcellular location is the endoplasmic reticulum membrane. The protein localises to the golgi apparatus. It localises to the cis-Golgi network membrane. The protein resides in the endoplasmic reticulum-Golgi intermediate compartment membrane. It is found in the cytoplasmic vesicle. Its subcellular location is the COPI-coated vesicle membrane. The protein localises to the COPII-coated vesicle membrane. In terms of biological role, potential role in vesicular protein trafficking, mainly in the early secretory pathway. Appears to play a role in the biosynthesis of secreted cargo including processing and post-translational modifications. In Homo sapiens (Human), this protein is Transmembrane emp24 domain-containing protein 7 (TMED7).